Consider the following 267-residue polypeptide: Protein isy-1 (267 aa).

Residues 175–204 are a coiled coil; it reads LEKLIEEKNIERINKEFAEKQAQKQQTASD. A disordered region spans residues 195 to 221; that stretch reads QAQKQQTASDAAPENIYKVEEDDDDDL.

Belongs to the ISY1 family. In terms of tissue distribution, ubiquitously expressed.

It is found in the nucleus. Regulates the processing of the mir-60 microRNA (miRNA), which in turn negatively regulates the expression of the transcription factor zip-10. Does not affect the splicing of zip-10. The sequence is that of Protein isy-1 from Caenorhabditis elegans.